A 234-amino-acid polypeptide reads, in one-letter code: uncharacterized protein (234 aa).

Residues Asn62–Ser99 form a disordered region. The span at Ser67–Pro79 shows a compositional bias: polar residues.

This is an uncharacterized protein from Acanthamoeba polyphaga (Amoeba).